A 613-amino-acid polypeptide reads, in one-letter code: TANK-binding kinase 1-binding protein 1 (613 aa).

Positions 1–280 are homodimerization; that stretch reads MESMFEDDIS…QDLASNQSEC (280 aa). Residues 48-162 are a coiled coil; that stretch reads YGDIKERLGG…ALVETHLRQI (115 aa). Ser184 carries the post-translational modification Phosphoserine. Residues 218-277 are a coiled coil; it reads TSVSVSELERRRLEEALEAAQGEARGAQLREEQLQAECERLQGELKQLQETRAQDLASNQ. Positions 281 to 330 are interaction with TBK1 and IKBKE; the sequence is GMAWVKRVGDDQVNLALAYTELTEELGRLRELSSLQGRILRTLLQEQARN. The disordered stretch occupies residues 328-457; that stretch reads ARNAGQRHSP…HHAKAGFQGR (130 aa). Pro residues predominate over residues 346 to 361; the sequence is PACPSPSPPARPPPCA. The span at 362 to 372 shows a compositional bias: low complexity; that stretch reads PCQSPAAQRRS. A phosphoserine mark is found at Ser365, Ser372, Ser379, Ser385, Ser400, and Ser415. Pro residues predominate over residues 389–406; it reads PSCPSPVPQRRSPVPPSC. Residues 416–433 show a composition bias toward pro residues; that stretch reads PVPPSCPAPQPRPPPPPG. Phosphoserine occurs at positions 502 and 532. The UBZ1-type zinc-finger motif lies at 581–607; that stretch reads IRSCPLCQLGFPVGYPDDALIKHIDSH. Residues Cys584, Cys587, His603, and His607 each coordinate Zn(2+).

As to quaternary structure, homodimer. May form a heterodimer with NAP1. Interacts with TKB1 and IKBKE. Weakly interacts with DDX3X.

In terms of biological role, adapter protein which constitutively binds TBK1 and IKBKE playing a role in antiviral innate immunity. Essential for the efficient induction of IRF-dependent transcription following infection with Sendai virus. This is TANK-binding kinase 1-binding protein 1 from Rattus norvegicus (Rat).